The chain runs to 324 residues: Glyceraldehyde-3-phosphate dehydrogenase 1 (324 aa).

NAD(+) contacts are provided by residues 13 to 14 (RI), Asp35, and Lys85. D-glyceraldehyde 3-phosphate is bound by residues 157 to 159 (SCT), Thr188, 217 to 218 (TG), and Arg240. Cys158 (nucleophile) is an active-site residue. Asn322 is an NAD(+) binding site.

It belongs to the glyceraldehyde-3-phosphate dehydrogenase family. As to quaternary structure, homotetramer.

The protein localises to the cytoplasm. The catalysed reaction is D-glyceraldehyde 3-phosphate + phosphate + NAD(+) = (2R)-3-phospho-glyceroyl phosphate + NADH + H(+). It functions in the pathway carbohydrate degradation; glycolysis; pyruvate from D-glyceraldehyde 3-phosphate: step 1/5. The chain is Glyceraldehyde-3-phosphate dehydrogenase 1 (GPD-1) from Globodera rostochiensis (Golden nematode worm).